The primary structure comprises 224 residues: Orotate phosphoribosyltransferase (224 aa).

5-phospho-alpha-D-ribose 1-diphosphate-binding positions include Lys-26, 73–74 (YK), Arg-100, Lys-101, Lys-104, His-106, and 127–135 (EDVTTSGKS). Residues Thr-131 and Arg-160 each contribute to the orotate site.

The protein belongs to the purine/pyrimidine phosphoribosyltransferase family. PyrE subfamily. In terms of assembly, homodimer. The cofactor is Mg(2+).

The catalysed reaction is orotidine 5'-phosphate + diphosphate = orotate + 5-phospho-alpha-D-ribose 1-diphosphate. The protein operates within pyrimidine metabolism; UMP biosynthesis via de novo pathway; UMP from orotate: step 1/2. Its function is as follows. Catalyzes the transfer of a ribosyl phosphate group from 5-phosphoribose 1-diphosphate to orotate, leading to the formation of orotidine monophosphate (OMP). The sequence is that of Orotate phosphoribosyltransferase from Clostridium botulinum (strain Eklund 17B / Type B).